Here is a 667-residue protein sequence, read N- to C-terminus: NADPH--cytochrome P450 reductase (667 aa).

At 1–8 (MEILESID) the chain is on the lumenal side. The chain crosses the membrane as a helical span at residues 9–29 (FIEVLILDNLGAIIIVAVIVG). Residues 30–667 (TYLYMNKPPP…HGRYLQDVWF (638 aa)) are Cytoplasmic-facing. Residues 72–215 (MKIFFGTQTR…DFNRWKKDMW (144 aa)) enclose the Flavodoxin-like domain. FMN contacts are provided by residues 164–173 (LGNKTYEHYN) and D199. One can recognise an FAD-binding FR-type domain in the interval 277–511 (KNPYYAEVLE…FVRESHFKLP (235 aa)). R297 is an NADP(+) binding site. FAD contacts are provided by residues 468-470 (TSV) and 484-487 (GVAS). Residues T527, 586-587 (SR), and 592-596 (KVYVQ) contribute to the NADP(+) site. Residue W666 coordinates FAD.

This sequence belongs to the NADPH--cytochrome P450 reductase family. It in the N-terminal section; belongs to the flavodoxin family. In the C-terminal section; belongs to the flavoprotein pyridine nucleotide cytochrome reductase family. The cofactor is FAD. FMN is required as a cofactor.

The protein localises to the endoplasmic reticulum membrane. The enzyme catalyses 2 oxidized [cytochrome P450] + NADPH = 2 reduced [cytochrome P450] + NADP(+) + H(+). In terms of biological role, this enzyme is required for electron transfer from NADP to cytochrome P450 in microsomes. It can also provide electron transfer to heme oxygenase and cytochrome B5. This Dictyostelium discoideum (Social amoeba) protein is NADPH--cytochrome P450 reductase (redB).